Reading from the N-terminus, the 226-residue chain is Neuron-specific vesicular protein calcyon (226 aa).

A disordered region spans residues 1–21 (MVKLGCSFSGKPGKEAGDQDG). Residues 1–88 (MVKLGCSFSG…EEGRRLPTAR (88 aa)) lie on the Extracellular side of the membrane. Residues 89 to 109 (MIAFAMALLGCVLIMYKAIWY) traverse the membrane as a helical segment. Residues 110 to 226 (DQFTCPDGFL…AEGVPSQPPK (117 aa)) are Cytoplasmic-facing. Residues 177-226 (HKGTTPAAMAVSTAAAAAAAEGTEPSGKSLDTREKEDPQKAEGVPSQPPK) form a disordered region. Residues 183 to 196 (AAMAVSTAAAAAAA) are compositionally biased toward low complexity. The span at 206-216 (LDTREKEDPQK) shows a compositional bias: basic and acidic residues.

This sequence belongs to the NSG family. Interacts with CLTA. In terms of tissue distribution, most abundant in brain. Also expressed in testis and ovary and, at much lower levels, in kidney and heart.

The protein resides in the cytoplasmic vesicle membrane. It localises to the cell membrane. Functionally, interacts with clathrin light chain A and stimulates clathrin self-assembly and clathrin-mediated endocytosis. This chain is Neuron-specific vesicular protein calcyon (Caly), found in Mus musculus (Mouse).